Consider the following 845-residue polypeptide: Leucine--tRNA ligase (845 aa).

The short motif at 40–51 (PYPSGAGLHVGH) is the 'HIGH' region element. Positions 623–627 (KMSKS) match the 'KMSKS' region motif. An ATP-binding site is contributed by lysine 626.

It belongs to the class-I aminoacyl-tRNA synthetase family.

The protein resides in the cytoplasm. It carries out the reaction tRNA(Leu) + L-leucine + ATP = L-leucyl-tRNA(Leu) + AMP + diphosphate. The chain is Leucine--tRNA ligase from Protochlamydia amoebophila (strain UWE25).